Reading from the N-terminus, the 386-residue chain is MVILGSTGSIGTQAIDVVLRNPGRFKVVALSAAGGAVELLAEQAVALGVHTVAVADPAAEEAAARGPGGQGAGRPLPRVLAGPDAATELAAAECHSVLNGITGSIGLAPTLAALRAGRVLVLANKESLIVGGPLVKAVAQPGQIVPVDSEHAALFQALAGGARAEVRKLVVTASGGPFRNRTREQLAAVTPADALAHPTWAMGPVVTINSATLVNKGLEVIEAHLLYDVPFDRIEVVVHPQSVVHSMVEFVDGSTMAQASPPDMRMPIALGLGWPDRVPDAAPGCDWTKAATWEFFPLDNEAFPAVELAREVGTLGGTAPAVFNAANEECVDAFLKGALPFTGIVDTVAKVVAEHGTPQSGTSLTVEDVLHAESWARARARELAAG.

Residues Thr-7, Gly-8, Ser-9, Ile-10, Ala-33, and Asn-124 each contribute to the NADPH site. Residue Lys-125 coordinates 1-deoxy-D-xylulose 5-phosphate. NADPH is bound at residue Glu-126. Asp-148 lines the Mn(2+) pocket. 1-deoxy-D-xylulose 5-phosphate-binding residues include Ser-149, Glu-150, Ser-174, and His-197. Glu-150 lines the Mn(2+) pocket. NADPH is bound at residue Gly-203. 1-deoxy-D-xylulose 5-phosphate-binding residues include Ser-210, Asn-215, Lys-216, and Glu-219. Position 219 (Glu-219) interacts with Mn(2+).

Belongs to the DXR family. Requires Mg(2+) as cofactor. Mn(2+) serves as cofactor.

It carries out the reaction 2-C-methyl-D-erythritol 4-phosphate + NADP(+) = 1-deoxy-D-xylulose 5-phosphate + NADPH + H(+). The protein operates within isoprenoid biosynthesis; isopentenyl diphosphate biosynthesis via DXP pathway; isopentenyl diphosphate from 1-deoxy-D-xylulose 5-phosphate: step 1/6. Catalyzes the NADPH-dependent rearrangement and reduction of 1-deoxy-D-xylulose-5-phosphate (DXP) to 2-C-methyl-D-erythritol 4-phosphate (MEP). This Kitasatospora griseola (Streptomyces griseolosporeus) protein is 1-deoxy-D-xylulose 5-phosphate reductoisomerase.